The sequence spans 591 residues: Thiol:disulfide interchange protein DsbD 1 (591 aa).

Positions 1 to 18 (MRRLLTLILLLVALPAGA) are cleaved as a signal peptide. The Periplasmic segment spans residues 19 to 175 (GLFDSRPGAS…GPLEHKGKRS (157 aa)). Intrachain disulfides connect Cys-134-Cys-140 and Cys-191-Cys-313. A helical membrane pass occupies residues 176–196 (LLFFFLAGLTLTFTPCVLPML). The Cytoplasmic portion of the chain corresponds to 197-213 (PILSGVVLRGRPGGGRG). The helical transmembrane segment at 214–234 (FVLSLAYVLPMALCFALLGAL) threads the bilayer. The Periplasmic segment spans residues 235–251 (MGMFGASLNLQAQLQSP). A helical transmembrane segment spans residues 252–272 (WVLVPFAAFFALFAVAMFGFF). The Cytoplasmic segment spans residues 273 to 295 (ELRLPGFIREPLDRLAGDARGGS). Residues 296–316 (ILGAATLGVLSSLLVSPCVSA) form a helical membrane-spanning segment. The Periplasmic portion of the chain corresponds to 317–338 (PLAASLLYISASGDAWGGGLQL). Residues 339–359 (FALGLGMGTPLVVFGAGGGAL) traverse the membrane as a helical segment. At 360–365 (LPKSGA) the chain is on the cytoplasmic side. A helical transmembrane segment spans residues 366 to 386 (WMNGVRNAFGVLLLAVAVWLL). Topologically, residues 387–392 (ERVVSG) are periplasmic. Residues 393–413 (PVALMLWGMLAGGAGLALGAL) traverse the membrane as a helical segment. The Cytoplasmic portion of the chain corresponds to 414 to 423 (EFTPKSAARR). A helical transmembrane segment spans residues 424–444 (LLQLLGLMFLTYAVAAWIGAL). Over 445–591 (QGESDPIHPL…ERLRRAATRQ (147 aa)) the chain is Periplasmic. Residues 452-589 (HPLGRSVPSI…LAERLRRAAT (138 aa)) form the Thioredoxin domain. The cysteines at positions 504 and 507 are disulfide-linked.

This sequence belongs to the thioredoxin family. DsbD subfamily.

Its subcellular location is the cell inner membrane. The enzyme catalyses [protein]-dithiol + NAD(+) = [protein]-disulfide + NADH + H(+). It catalyses the reaction [protein]-dithiol + NADP(+) = [protein]-disulfide + NADPH + H(+). Required to facilitate the formation of correct disulfide bonds in some periplasmic proteins and for the assembly of the periplasmic c-type cytochromes. Acts by transferring electrons from cytoplasmic thioredoxin to the periplasm. This transfer involves a cascade of disulfide bond formation and reduction steps. The protein is Thiol:disulfide interchange protein DsbD 1 of Pseudomonas aeruginosa (strain ATCC 15692 / DSM 22644 / CIP 104116 / JCM 14847 / LMG 12228 / 1C / PRS 101 / PAO1).